The following is a 555-amino-acid chain: CTP synthase (555 aa).

Positions 1–271 (MVKRGKKTKY…DDKLAELFNI (271 aa)) are amidoligase domain. Serine 19 serves as a coordination point for CTP. UTP is bound at residue serine 19. Residues 20–25 (SLGKGL) and aspartate 77 contribute to the ATP site. Mg(2+) contacts are provided by aspartate 77 and glutamate 145. CTP-binding positions include 152-154 (DIE), 192-197 (KTKPTQ), and lysine 228. UTP contacts are provided by residues 192–197 (KTKPTQ) and lysine 228. The region spanning 297–537 (RIGIVGKYVE…VKAALEHRDA (241 aa)) is the Glutamine amidotransferase type-1 domain. L-glutamine is bound at residue glycine 358. The Nucleophile; for glutamine hydrolysis role is filled by cysteine 385. L-glutamine contacts are provided by residues 386–389 (LGLQ), glutamate 409, and arginine 466. Active-site residues include histidine 510 and glutamate 512. The interval 536 to 555 (DAQQRQPSAEVKKLPVGKNG) is disordered.

The protein belongs to the CTP synthase family. As to quaternary structure, homotetramer.

The enzyme catalyses UTP + L-glutamine + ATP + H2O = CTP + L-glutamate + ADP + phosphate + 2 H(+). The catalysed reaction is L-glutamine + H2O = L-glutamate + NH4(+). It catalyses the reaction UTP + NH4(+) + ATP = CTP + ADP + phosphate + 2 H(+). Its pathway is pyrimidine metabolism; CTP biosynthesis via de novo pathway; CTP from UDP: step 2/2. Its activity is regulated as follows. Allosterically activated by GTP, when glutamine is the substrate; GTP has no effect on the reaction when ammonia is the substrate. The allosteric effector GTP functions by stabilizing the protein conformation that binds the tetrahedral intermediate(s) formed during glutamine hydrolysis. Inhibited by the product CTP, via allosteric rather than competitive inhibition. Its function is as follows. Catalyzes the ATP-dependent amination of UTP to CTP with either L-glutamine or ammonia as the source of nitrogen. Regulates intracellular CTP levels through interactions with the four ribonucleotide triphosphates. In Anaeromyxobacter dehalogenans (strain 2CP-C), this protein is CTP synthase.